The sequence spans 493 residues: MNKQASQPRAIYYVVALQIWEYFSFYGMRALLILYLTNQLKYDDNHAYELFSAYCSLVYVTPILGGYLADKVLGNRMAVMLGAFLMAIGHLVLGASEIAPTFLYLSLAIIVCGYGLFKSNISCLLGELYQPEDPRRDGGFSLLYAAGNIGSIVAPIACGYVQEEYSWAMGFALAAIGMLAGLVIFLCGNRHFTHTTGVNKAVLCARNYLLPNWGWLLILLVAAPLLITVLFWKEWSVYALIVATAIGLVVLAKIYRQAQTAKQRKELGLIVTLTLFSMLFWAFAQQGGSSISLYIDRFVNRDILGYSVPTAMFQSVNAFAVMLCGVVLAWLVKESVSGNRTVRIWGKFALGLGLMSAGFCILTLSARWSAAYGHSSMPLMVLGLAVMGFAELFIDPVAMSQITRIDIPGVTGVLTGIYMLLSGAIANYLAGVIADQTSQSAFDASGAVNYAINAYVDVFEQITWGALACVGVVLLIWLYQSFKFKSRALAVES.

The next 13 membrane-spanning stretches (helical) occupy residues 14–34 (VVAL…LLIL), 49–69 (ELFS…GYLA), 91–111 (LVLG…AIIV), 138–158 (GGFS…PIAC), 167–187 (WAMG…IFLC), 212–232 (NWGW…VLFW), 235–255 (WSVY…AKIY), 267–287 (LGLI…AQQG), 312–332 (MFQS…AWLV), 344–364 (IWGK…ILTL), 379–399 (LMVL…PVAM), 413–433 (VLTG…AGVI), and 458–478 (VFEQ…LIWL).

Belongs to the major facilitator superfamily. Proton-dependent oligopeptide transporter (POT/PTR) (TC 2.A.17) family. DtpD subfamily.

It is found in the cell inner membrane. Functionally, probable proton-dependent permease that transports dipeptides. The chain is Dipeptide permease D from Salmonella typhimurium (strain 14028s / SGSC 2262).